Here is a 482-residue protein sequence, read N- to C-terminus: G patch domain-containing protein 2-like (482 aa).

S31, S86, and S88 each carry phosphoserine. At T91 the chain carries Phosphothreonine. Residue K196 forms a Glycyl lysine isopeptide (Lys-Gly) (interchain with G-Cter in SUMO2) linkage. The span at 198–214 (GRKERMECETDEQKQGS) shows a compositional bias: basic and acidic residues. 2 disordered regions span residues 198–247 (GRKE…DDEQ) and 413–482 (KRKR…PGYS). The segment covering 220 to 230 (ECETSSVCSSS) has biased composition (low complexity). A compositionally biased stretch (polar residues) spans 439–450 (TPASQAPKSPSS). Phosphoserine occurs at positions 447 and 449. Over residues 456-469 (TSAAEKATDATTAT) the composition is skewed to low complexity.

This chain is G patch domain-containing protein 2-like (GPATCH2L), found in Homo sapiens (Human).